Consider the following 455-residue polypeptide: Bifunctional protein GlmU (455 aa).

The interval Met-1 to Arg-226 is pyrophosphorylase. Residues Leu-8–Gly-11, Lys-22, Gln-73, Gly-78–Thr-79, Tyr-99–Asp-101, Gly-136, Glu-151, Asn-166, and Asn-224 contribute to the UDP-N-acetyl-alpha-D-glucosamine site. Residue Asp-101 participates in Mg(2+) binding. Position 224 (Asn-224) interacts with Mg(2+). Residues Thr-227 to Lys-247 are linker. Positions Gly-248–Lys-455 are N-acetyltransferase. Arg-330 and Lys-348 together coordinate UDP-N-acetyl-alpha-D-glucosamine. The Proton acceptor role is filled by His-360. The UDP-N-acetyl-alpha-D-glucosamine site is built by Tyr-363 and Asn-374. Acetyl-CoA is bound by residues Ala-377, Asn-383–Tyr-384, Ser-402, Ala-420, and Arg-437.

It in the N-terminal section; belongs to the N-acetylglucosamine-1-phosphate uridyltransferase family. The protein in the C-terminal section; belongs to the transferase hexapeptide repeat family. Homotrimer. Requires Mg(2+) as cofactor.

The protein resides in the cytoplasm. It catalyses the reaction alpha-D-glucosamine 1-phosphate + acetyl-CoA = N-acetyl-alpha-D-glucosamine 1-phosphate + CoA + H(+). It carries out the reaction N-acetyl-alpha-D-glucosamine 1-phosphate + UTP + H(+) = UDP-N-acetyl-alpha-D-glucosamine + diphosphate. It participates in nucleotide-sugar biosynthesis; UDP-N-acetyl-alpha-D-glucosamine biosynthesis; N-acetyl-alpha-D-glucosamine 1-phosphate from alpha-D-glucosamine 6-phosphate (route II): step 2/2. Its pathway is nucleotide-sugar biosynthesis; UDP-N-acetyl-alpha-D-glucosamine biosynthesis; UDP-N-acetyl-alpha-D-glucosamine from N-acetyl-alpha-D-glucosamine 1-phosphate: step 1/1. The protein operates within bacterial outer membrane biogenesis; LPS lipid A biosynthesis. Functionally, catalyzes the last two sequential reactions in the de novo biosynthetic pathway for UDP-N-acetylglucosamine (UDP-GlcNAc). The C-terminal domain catalyzes the transfer of acetyl group from acetyl coenzyme A to glucosamine-1-phosphate (GlcN-1-P) to produce N-acetylglucosamine-1-phosphate (GlcNAc-1-P), which is converted into UDP-GlcNAc by the transfer of uridine 5-monophosphate (from uridine 5-triphosphate), a reaction catalyzed by the N-terminal domain. In Francisella tularensis subsp. tularensis (strain SCHU S4 / Schu 4), this protein is Bifunctional protein GlmU.